The primary structure comprises 758 residues: 5-methyltetrahydropteroyltriglutamate--homocysteine methyltransferase (758 aa).

5-methyltetrahydropteroyltri-L-glutamate-binding positions include 16–19 (RELK) and K116. Residues 436-438 (IGS) and E489 each bind L-homocysteine. Residues 436–438 (IGS) and E489 contribute to the L-methionine site. 5-methyltetrahydropteroyltri-L-glutamate is bound by residues 520 to 521 (RC) and W566. D604 is an L-homocysteine binding site. D604 contributes to the L-methionine binding site. E610 is a 5-methyltetrahydropteroyltri-L-glutamate binding site. 3 residues coordinate Zn(2+): H646, C648, and E670. H699 acts as the Proton donor in catalysis. C731 lines the Zn(2+) pocket.

This sequence belongs to the vitamin-B12 independent methionine synthase family. Zn(2+) serves as cofactor.

It catalyses the reaction 5-methyltetrahydropteroyltri-L-glutamate + L-homocysteine = tetrahydropteroyltri-L-glutamate + L-methionine. Its pathway is amino-acid biosynthesis; L-methionine biosynthesis via de novo pathway; L-methionine from L-homocysteine (MetE route): step 1/1. Functionally, catalyzes the transfer of a methyl group from 5-methyltetrahydrofolate to homocysteine resulting in methionine formation. The protein is 5-methyltetrahydropteroyltriglutamate--homocysteine methyltransferase of Xylella fastidiosa (strain M23).